A 3410-amino-acid polypeptide reads, in one-letter code: Genome polyprotein (3410 aa).

Over Met1 to Ser103 the chain is Cytoplasmic. The tract at residues Thr2–Asn15 is interaction with host EXOC1. Positions Leu38–Met73 are hydrophobic; homodimerization of capsid protein C. A propeptide spans Ser103–Ala119 (ER anchor for the capsid protein C, removed in mature form by serine protease NS3). The chain crosses the membrane as a helical span at residues Gly104–Leu124. Residues Glu125–Ser245 are Extracellular-facing. The helical transmembrane segment at Trp246–Thr266 threads the bilayer. Over Ser267 to Lys271 the chain is Cytoplasmic. A helical membrane pass occupies residues Val272–Ser286. Over Ile287–Leu739 the chain is Extracellular. Disulfide bonds link Cys289-Cys316, Cys346-Cys402, Cys346-Cys407, Cys360-Cys391, Cys378-Cys402, and Cys378-Cys407. A fusion peptide region spans residues Asp384–Gly397. The N-linked (GlcNAc...) asparagine; by host glycan is linked to Asn440. Disulfide bonds link Cys476-Cys574 and Cys591-Cys622. Residues Phe740 to Ile760 traverse the membrane as a helical segment. The Cytoplasmic segment spans residues Asn761–Thr766. Residues Ile767–Ala787 form a helical membrane-spanning segment. The Extracellular segment spans residues Asp788–Arg1165. Disulfide bonds link Cys791–Cys802, Cys842–Cys928, Cys964–Cys1009, Cys1066–Cys1115, Cys1077–Cys1098, Cys1077–Cys1099, Cys1098–Cys1102, and Cys1099–Cys1102. The N-linked (GlcNAc...) asparagine; by host glycan is linked to Asn915. The chain crosses the membrane as a helical span at residues Ile1166 to Gly1186. Residues Leu1187–His1214 lie on the Cytoplasmic side of the membrane. A helical transmembrane segment spans residues Leu1215–Gly1235. Topologically, residues Arg1236–Ser1242 are lumenal. The helical transmembrane segment at Leu1243 to Phe1263 threads the bilayer. Residues Glu1264 to Thr1284 are Cytoplasmic-facing. The chain crosses the membrane as a helical span at residues Thr1285–Gly1305. Topologically, residues Thr1306–Ala1335 are lumenal. A helical transmembrane segment spans residues Val1336 to Val1356. At Thr1357–Ser1363 the chain is on the cytoplasmic side. Residues Trp1364–Ala1384 traverse the membrane as a helical segment. The Lumenal segment spans residues Glu1385–Glu1387. Residues Val1388–Gly1408 traverse the membrane as a helical segment. The Cytoplasmic portion of the chain corresponds to Arg1409 to Gly1464. An interacts with and activates NS3 protease region spans residues Ile1415 to Pro1454. Residues Leu1465–Phe1485 constitute an intramembrane region (helical). Residues Leu1486–Met2158 are Cytoplasmic-facing. Residues Ala1493 to Glu1670 enclose the Peptidase S7 domain. Catalysis depends on charge relay system; for serine protease NS3 activity residues His1543, Asp1567, and Ser1627. Positions Asp1673–Glu1829 constitute a Helicase ATP-binding domain. The interval Arg1677–Glu1680 is important for RNA-binding. Residue Leu1686 to Thr1693 participates in ATP binding. The DEAH box motif lies at Asp1777–His1780. The 168-residue stretch at Ser1839 to Thr2006 folds into the Helicase C-terminal domain. N6-acetyllysine; by host is present on Lys1881. Positions Glu2153–Glu2157 are regulates the ATPase activity of NS3 helicase. The chain crosses the membrane as a helical span at residues Ile2159–Leu2179. The Lumenal segment spans residues Val2180–Pro2185. Residues Gly2186–Ala2205 constitute an intramembrane region (helical). Position 2206 (Gly2206) is a topological domain, lumenal. A helical membrane pass occupies residues Val2207 to Ile2227. At Pro2228 to Ala2242 the chain is on the cytoplasmic side. Residues Met2243–Ala2257 form a helical membrane-spanning segment. Residues Asn2258–Thr2293 lie on the Lumenal side of the membrane. The segment at residues Ala2294–Val2314 is an intramembrane region (helical). The Lumenal segment spans residues Thr2315–Asp2336. Residues Ser2337–Thr2357 traverse the membrane as a helical segment. Gln2358 is a topological domain (cytoplasmic). A helical membrane pass occupies residues Ile2359–Leu2379. Residues Pro2380–Pro2420 lie on the Lumenal side of the membrane. Residues Leu2421–Ile2441 form a helical membrane-spanning segment. The Cytoplasmic portion of the chain corresponds to Thr2442 to Leu3410. The 266-residue stretch at Gly2508–Ala2773 folds into the mRNA cap 0-1 NS5-type MT domain. An S-adenosyl-L-methionine-binding site is contributed by Ser2563. Ser2563 is subject to Phosphoserine. The active-site For 2'-O-MTase activity is the Lys2568. 6 residues coordinate S-adenosyl-L-methionine: Gly2593, Trp2594, Thr2611, Lys2612, Asp2638, and Val2639. The active-site For 2'-O-MTase activity is the Asp2653. Ile2654 serves as a coordination point for S-adenosyl-L-methionine. Catalysis depends on for 2'-O-MTase activity residues Lys2690 and Glu2726. Tyr2728 contributes to the S-adenosyl-L-methionine binding site. Residues Glu2947, His2951, Cys2956, and Cys2959 each coordinate Zn(2+). The region spanning Gly3036–Ala3187 is the RdRp catalytic domain. Positions 3222, 3238, and 3356 each coordinate Zn(2+).

In the N-terminal section; belongs to the class I-like SAM-binding methyltransferase superfamily. mRNA cap 0-1 NS5-type methyltransferase family. As to quaternary structure, homodimer. Interacts (via N-terminus) with host EXOC1 (via C-terminus); this interaction results in EXOC1 degradation through the proteasome degradation pathway. Forms heterodimers with envelope protein E in the endoplasmic reticulum and Golgi. In terms of assembly, homodimer; in the endoplasmic reticulum and Golgi. Interacts with protein prM. Interacts with non-structural protein 1. As to quaternary structure, homodimer; Homohexamer when secreted. Interacts with envelope protein E. NS1 interacts with NS4B. Interacts with host complement protein CFH; this interaction leads to the degradation of C3. Interacts (via N-terminus) with serine protease NS3. In terms of assembly, forms a heterodimer with serine protease NS3. May form homooligomers. As to quaternary structure, forms a heterodimer with NS2B. Interacts with non-structural protein 2A (via N-terminus). Interacts with NS4B. Interacts with unphosphorylated RNA-directed RNA polymerase NS5; this interaction stimulates RNA-directed RNA polymerase NS5 guanylyltransferase activity. Interacts with serine protease NS3. In terms of assembly, homodimer. Interacts with host STAT2; this interaction inhibits the phosphorylation of the latter, and, when all viral proteins are present (polyprotein), targets STAT2 for degradation. Specific enzymatic cleavages in vivo yield mature proteins. Cleavages in the lumen of endoplasmic reticulum are performed by host signal peptidase, whereas cleavages in the cytoplasmic side are performed by serine protease NS3. Signal cleavage at the 2K-4B site requires a prior NS3 protease-mediated cleavage at the 4A-2K site. In terms of processing, cleaved in post-Golgi vesicles by a host furin, releasing the mature small envelope protein M, and peptide pr. This cleavage is incomplete as up to 30% of viral particles still carry uncleaved prM. Post-translationally, N-glycosylated. N-glycosylated. The excreted form is glycosylated and this is required for efficient secretion of the protein from infected cells. In terms of processing, acetylated by host KAT5. Acetylation modulates NS3 RNA-binding and unwinding activities and plays an important positive role for viral replication. Post-translationally, phosphorylated on serines residues. This phosphorylation may trigger NS5 nuclear localization.

The protein localises to the virion. The protein resides in the host nucleus. It localises to the host cytoplasm. It is found in the host perinuclear region. Its subcellular location is the secreted. The protein localises to the virion membrane. The protein resides in the host endoplasmic reticulum membrane. The catalysed reaction is Selective hydrolysis of -Xaa-Xaa-|-Yaa- bonds in which each of the Xaa can be either Arg or Lys and Yaa can be either Ser or Ala.. It catalyses the reaction RNA(n) + a ribonucleoside 5'-triphosphate = RNA(n+1) + diphosphate. The enzyme catalyses a ribonucleoside 5'-triphosphate + H2O = a ribonucleoside 5'-diphosphate + phosphate + H(+). It carries out the reaction ATP + H2O = ADP + phosphate + H(+). The catalysed reaction is a 5'-end (5'-triphosphoguanosine)-ribonucleoside in mRNA + S-adenosyl-L-methionine = a 5'-end (N(7)-methyl 5'-triphosphoguanosine)-ribonucleoside in mRNA + S-adenosyl-L-homocysteine. It catalyses the reaction a 5'-end (N(7)-methyl 5'-triphosphoguanosine)-ribonucleoside in mRNA + S-adenosyl-L-methionine = a 5'-end (N(7)-methyl 5'-triphosphoguanosine)-(2'-O-methyl-ribonucleoside) in mRNA + S-adenosyl-L-homocysteine + H(+). Its function is as follows. Plays a role in virus budding by binding to the cell membrane and gathering the viral RNA into a nucleocapsid that forms the core of a mature virus particle. During virus entry, may induce genome penetration into the host cytoplasm after hemifusion induced by the surface proteins. Can migrate to the cell nucleus where it modulates host functions. Overcomes the anti-viral effects of host EXOC1 by sequestering and degrading the latter through the proteasome degradation pathway. Functionally, inhibits RNA silencing by interfering with host Dicer. In terms of biological role, prevents premature fusion activity of envelope proteins in trans-Golgi by binding to envelope protein E at pH6.0. After virion release in extracellular space, gets dissociated from E dimers. Acts as a chaperone for envelope protein E during intracellular virion assembly by masking and inactivating envelope protein E fusion peptide. prM is the only viral peptide matured by host furin in the trans-Golgi network probably to avoid catastrophic activation of the viral fusion activity in acidic Golgi compartment prior to virion release. prM-E cleavage is inefficient, and many virions are only partially matured. These uncleaved prM would play a role in immune evasion. Its function is as follows. May play a role in virus budding. Exerts cytotoxic effects by activating a mitochondrial apoptotic pathway through M ectodomain. May display a viroporin activity. Functionally, binds to host cell surface receptor and mediates fusion between viral and cellular membranes. Envelope protein is synthesized in the endoplasmic reticulum in the form of heterodimer with protein prM. They play a role in virion budding in the ER, and the newly formed immature particle is covered with 60 spikes composed of heterodimer between precursor prM and envelope protein E. The virion is transported to the Golgi apparatus where the low pH causes dissociation of PrM-E heterodimers and formation of E homodimers. prM-E cleavage is inefficient, and many virions are only partially matured. These uncleaved prM would play a role in immune evasion. In terms of biological role, involved in immune evasion, pathogenesis and viral replication. Once cleaved off the polyprotein, is targeted to three destinations: the viral replication cycle, the plasma membrane and the extracellular compartment. Essential for viral replication. Required for formation of the replication complex and recruitment of other non-structural proteins to the ER-derived membrane structures. Excreted as a hexameric lipoparticle that plays a role against host immune response. Antagonizing the complement function. Binds to the host macrophages and dendritic cells. Inhibits signal transduction originating from Toll-like receptor 3 (TLR3). Component of the viral RNA replication complex that functions in virion assembly and antagonizes the host alpha/beta interferon antiviral response. Its function is as follows. Required cofactor for the serine protease function of NS3. May have membrane-destabilizing activity and form viroporins. Functionally, displays three enzymatic activities: serine protease, NTPase and RNA helicase. NS3 serine protease, in association with NS2B, performs its autocleavage and cleaves the polyprotein at dibasic sites in the cytoplasm: C-prM, NS2A-NS2B, NS2B-NS3, NS3-NS4A, NS4A-2K and NS4B-NS5. NS3 RNA helicase binds RNA and unwinds dsRNA in the 3' to 5' direction. In terms of biological role, regulates the ATPase activity of the NS3 helicase activity. NS4A allows NS3 helicase to conserve energy during unwinding. Functions as a signal peptide for NS4B and is required for the interferon antagonism activity of the latter. Its function is as follows. Induces the formation of ER-derived membrane vesicles where the viral replication takes place. Inhibits interferon (IFN)-induced host STAT1 phosphorylation and nuclear translocation, thereby preventing the establishment of cellular antiviral state by blocking the IFN-alpha/beta pathway. Inhibits STAT2 translocation in the nucleus after IFN-alpha treatment. Functionally, replicates the viral (+) and (-) RNA genome, and performs the capping of genomes in the cytoplasm. NS5 methylates viral RNA cap at guanine N-7 and ribose 2'-O positions. Besides its role in RNA genome replication, also prevents the establishment of cellular antiviral state by blocking the interferon-alpha/beta (IFN-alpha/beta) signaling pathway. Inhibits host TYK2 and STAT2 phosphorylation, thereby preventing activation of JAK-STAT signaling pathway. The protein is Genome polyprotein of Kokobera virus (KOKV).